The primary structure comprises 207 residues: Guanylate kinase (207 aa).

The 179-residue stretch at 3-181 (GQLFVICGPS…AVEMVVSIVR (179 aa)) folds into the Guanylate kinase-like domain. 10–17 (GPSGAGKT) is a binding site for ATP.

Belongs to the guanylate kinase family.

The protein localises to the cytoplasm. It carries out the reaction GMP + ATP = GDP + ADP. In terms of biological role, essential for recycling GMP and indirectly, cGMP. The protein is Guanylate kinase (gmk) of Thermotoga maritima (strain ATCC 43589 / DSM 3109 / JCM 10099 / NBRC 100826 / MSB8).